The sequence spans 239 residues: Sugar fermentation stimulation protein homolog (239 aa).

It belongs to the SfsA family.

The chain is Sugar fermentation stimulation protein homolog from Cyanothece sp. (strain PCC 7425 / ATCC 29141).